The chain runs to 230 residues: Demethylmenaquinone methyltransferase (230 aa).

S-adenosyl-L-methionine contacts are provided by residues T62, D80, 100–101 (DG), and S117.

Belongs to the class I-like SAM-binding methyltransferase superfamily. MenG/UbiE family.

The enzyme catalyses a 2-demethylmenaquinol + S-adenosyl-L-methionine = a menaquinol + S-adenosyl-L-homocysteine + H(+). It functions in the pathway quinol/quinone metabolism; menaquinone biosynthesis; menaquinol from 1,4-dihydroxy-2-naphthoate: step 2/2. Methyltransferase required for the conversion of demethylmenaquinol (DMKH2) to menaquinol (MKH2). The protein is Demethylmenaquinone methyltransferase of Corynebacterium glutamicum (strain R).